Consider the following 199-residue polypeptide: Molybdenum cofactor guanylyltransferase (199 aa).

GTP contacts are provided by residues 12-14 (LAG), Lys-25, Asn-53, Asp-71, and Asp-101. Asp-101 contributes to the Mg(2+) binding site.

This sequence belongs to the MobA family. As to quaternary structure, monomer. The cofactor is Mg(2+).

It localises to the cytoplasm. The enzyme catalyses Mo-molybdopterin + GTP + H(+) = Mo-molybdopterin guanine dinucleotide + diphosphate. Functionally, transfers a GMP moiety from GTP to Mo-molybdopterin (Mo-MPT) cofactor (Moco or molybdenum cofactor) to form Mo-molybdopterin guanine dinucleotide (Mo-MGD) cofactor. This chain is Molybdenum cofactor guanylyltransferase, found in Cupriavidus taiwanensis (strain DSM 17343 / BCRC 17206 / CCUG 44338 / CIP 107171 / LMG 19424 / R1) (Ralstonia taiwanensis (strain LMG 19424)).